The sequence spans 182 residues: UPF0149 protein CGSHiEE_07975 (182 aa).

The protein belongs to the UPF0149 family.

The chain is UPF0149 protein CGSHiEE_07975 from Haemophilus influenzae (strain PittEE).